The sequence spans 224 residues: Deoxyribose-phosphate aldolase (224 aa).

The active-site Proton donor/acceptor is Asp-92. The active-site Schiff-base intermediate with acetaldehyde is the Lys-155. The active-site Proton donor/acceptor is the Lys-184.

This sequence belongs to the DeoC/FbaB aldolase family. DeoC type 1 subfamily.

Its subcellular location is the cytoplasm. The enzyme catalyses 2-deoxy-D-ribose 5-phosphate = D-glyceraldehyde 3-phosphate + acetaldehyde. It functions in the pathway carbohydrate degradation; 2-deoxy-D-ribose 1-phosphate degradation; D-glyceraldehyde 3-phosphate and acetaldehyde from 2-deoxy-alpha-D-ribose 1-phosphate: step 2/2. Functionally, catalyzes a reversible aldol reaction between acetaldehyde and D-glyceraldehyde 3-phosphate to generate 2-deoxy-D-ribose 5-phosphate. In Clostridium perfringens (strain ATCC 13124 / DSM 756 / JCM 1290 / NCIMB 6125 / NCTC 8237 / Type A), this protein is Deoxyribose-phosphate aldolase.